We begin with the raw amino-acid sequence, 61 residues long: Insect toxin BsIT3 (61 aa).

An LCN-type CS-alpha/beta domain is found at 1–61; it reads DGYILNSKGC…RWTSSKNKCN (61 aa). 4 disulfide bridges follow: C10–C60, C14–C35, C21–C42, and C25–C44.

The protein belongs to the long (4 C-C) scorpion toxin superfamily. Sodium channel inhibitor family. Beta subfamily. Expressed by the venom gland.

Its subcellular location is the secreted. Functionally, depressant insect beta-toxins cause a transient contraction paralysis followed by a slow flaccid paralysis. They bind voltage-independently at site-4 of sodium channels (Nav) and shift the voltage of activation toward more negative potentials thereby affecting sodium channel activation and promoting spontaneous and repetitive firing. This toxin is active only on insects. The polypeptide is Insect toxin BsIT3 (Hottentotta tamulus sindicus (Scorpion)).